Consider the following 160-residue polypeptide: MNSSIKRLHKEYASFQAGDISGLLLLKPVTDVDMFHWKAVIEGPTETPYEGGQWVLDIHVHEGYPISPPSVYFQTKIVHPNISWTNGEVCMDILKTHWSPAWSLQSACLAIISLLSNYDASSPLNVDAAKLLRTGDKTAYNSLVRCTTYLYAKGKIEDLS.

The region spanning 3–153 (SSIKRLHKEY…VRCTTYLYAK (151 aa)) is the UBC core domain. The active-site Glycyl thioester intermediate is Cys90.

The protein belongs to the ubiquitin-conjugating enzyme family.

The catalysed reaction is S-ubiquitinyl-[E1 ubiquitin-activating enzyme]-L-cysteine + [E2 ubiquitin-conjugating enzyme]-L-cysteine = [E1 ubiquitin-activating enzyme]-L-cysteine + S-ubiquitinyl-[E2 ubiquitin-conjugating enzyme]-L-cysteine.. It participates in protein modification; protein ubiquitination. Its function is as follows. Catalyzes the covalent attachment of ubiquitin to other proteins. This is Ubiquitin-conjugating enzyme E2 16 (ubc16) from Schizosaccharomyces pombe (strain 972 / ATCC 24843) (Fission yeast).